We begin with the raw amino-acid sequence, 511 residues long: Dopamine receptor 1 (511 aa).

Residues 1–19 form the signal peptide; sequence MYTPHPFGFLIILVPMTNA. Residues 20 to 142 lie on the Extracellular side of the membrane; sequence MRAIAAIAAG…EEPEPLSLVS (123 aa). 5 N-linked (GlcNAc...) asparagine glycosylation sites follow: asparagine 53, asparagine 63, asparagine 74, asparagine 117, and asparagine 123. Residues 143-169 form a helical membrane-spanning segment; that stretch reads IVVVGIFLSVLIFLSVAGNILVCLAIY. The Cytoplasmic portion of the chain corresponds to 170-179; sequence TERSLRRIGN. Residues 180–206 form a helical membrane-spanning segment; the sequence is LFLASLAIADLFVASLVMTFAGVNDLL. The Extracellular portion of the chain corresponds to 207–216; that stretch reads GYWIFGAQFC. A disulfide bond links cysteine 216 and cysteine 302. Residues 217 to 239 form a helical membrane-spanning segment; it reads DTWVAFDVMCSTASILNLCAISM. At 240-258 the chain is on the cytoplasmic side; that stretch reads DRYIHIKDPLRYGRWVTRR. The chain crosses the membrane as a helical span at residues 259 to 279; that stretch reads VAVITIAAIWLLAAFVSFVPI. Topologically, residues 280-310 are extracellular; the sequence is SLGIHRPDQPLIFEDNGKKYPTCALDLTPTY. Residues 311–331 form a helical membrane-spanning segment; that stretch reads AVVSSCISFYFPCVVMIGIYC. The Cytoplasmic segment spans residues 332 to 391; the sequence is RLYCYAQKHVKSIKAVTRPGEVAEKQRYKSIRRPKNQPKKFKVRNLHTHSSPYHVSDHKA. A helical transmembrane segment spans residues 392–412; that stretch reads AVTVGVIMGVFLICWVPFFCV. Topologically, residues 413-427 are extracellular; it reads NITAAFCKTCIGGQT. A helical transmembrane segment spans residues 428 to 450; it reads FKILTWLGYSNSAFNPIIYSIFN. Over 451–511 the chain is Cytoplasmic; that stretch reads KEFRDAFKRI…SAELEQVSAI (61 aa). 2 S-palmitoyl cysteine lipidation sites follow: cysteine 468 and cysteine 469.

The protein belongs to the G-protein coupled receptor 1 family. In terms of tissue distribution, expressed in the larval and adult CNS in structures that mediate higher-order brain functions such as learning, memory and motor control: in the mushroom body neuropil and four unpaired neurons in each thoracic segment. The adult CNS has intense expression in the central complex, moderate expression in several neurosecretory cells, and weak expression in two unpaired neurons in the mesothoracic neuromere. Also seen in the somata of the optic lobes.

It is found in the cell membrane. Receptor for dopamine. The activity of this receptor is mediated by G proteins which activate adenylyl cyclase. Might be involved in the processing of visual information and/or visual learning. Important for Pavlovian conditioning: required in the mushroom body as a receptor conveying unconditional stimuli information, has a role in memory formation for aversive and appetitive learning. Sleep-deprivation-induced impairments in learning can be partially explained through alterations in dopamine signaling, Dop1R1 expression levels are reduced; sleep may have a role in restoring dopamine homeostasis. This is Dopamine receptor 1 (Dop1R1) from Drosophila melanogaster (Fruit fly).